The primary structure comprises 180 residues: Cytidylate kinase (180 aa).

An ATP-binding site is contributed by G7–T15.

The protein belongs to the cytidylate kinase family. Type 2 subfamily.

Its subcellular location is the cytoplasm. It catalyses the reaction CMP + ATP = CDP + ADP. The catalysed reaction is dCMP + ATP = dCDP + ADP. The polypeptide is Cytidylate kinase (cmk) (Methanosarcina mazei (strain ATCC BAA-159 / DSM 3647 / Goe1 / Go1 / JCM 11833 / OCM 88) (Methanosarcina frisia)).